The primary structure comprises 261 residues: MEEEEEDYMSDAFINSLQDVRPGMSMPRRVKECYEKEEKHKEANIKNRQQKLKDVEKEKRDTKLNEALGNENKGFALLQKMGYKKGQALGKKGDGIVEPIPLNIKTGRSGIGHEEMKKRKAEENLESYRRKIQMRKHDEEQAADDFRMRMKSKREEIRLKADLSKSQRACMLLDGQKSISTPREAWYWPKMNEQEADEEADEETEEDEDLVEEELSTLEKLQILTSYLRGRHLFCIWCGTTYQDDEDMESNCPGDTAEDHN.

3 disordered regions span residues 1–67 (MEEE…LNEA), 88–124 (ALGK…AEEN), and 184–213 (EAWY…LVEE). 2 stretches are compositionally biased toward basic and acidic residues: residues 29-64 (RVKE…DTKL) and 111-124 (IGHE…AEEN). The stretch at 31–65 (KECYEKEEKHKEANIKNRQQKLKDVEKEKRDTKLN) forms a coiled coil. The 47-residue stretch at 70–116 (NENKGFALLQKMGYKKGQALGKKGDGIVEPIPLNIKTGRSGIGHEEM) folds into the G-patch domain. Residues 190–222 (KMNEQEADEEADEETEEDEDLVEEELSTLEKLQ) adopt a coiled-coil conformation. The span at 194–213 (QEADEEADEETEEDEDLVEE) shows a compositional bias: acidic residues.

The protein belongs to the GPATCH11 family.

The protein resides in the chromosome. The protein localises to the centromere. It localises to the kinetochore. The protein is G patch domain-containing protein 11 (gpatch11) of Xenopus tropicalis (Western clawed frog).